Reading from the N-terminus, the 640-residue chain is Chaperone protein HtpG (640 aa).

An a; substrate-binding region spans residues 1-348; that stretch reads MADVAHQETH…SNDLPLNVSR (348 aa). Residues 349 to 565 form a b region; sequence EILQDNKITQ…GTGMSTQMIK (217 aa). The interval 566 to 640 is c; sequence LMQAAGQPVP…LNTLLMNLAK (75 aa).

The protein belongs to the heat shock protein 90 family. As to quaternary structure, homodimer.

The protein localises to the cytoplasm. Functionally, molecular chaperone. Has ATPase activity. This chain is Chaperone protein HtpG, found in Pseudoalteromonas atlantica (strain T6c / ATCC BAA-1087).